A 409-amino-acid chain; its full sequence is tRNA-specific 2-thiouridylase MnmA (409 aa).

Residues 20-27 (AMSGGVDS) and Leu46 each bind ATP. Cys114 (nucleophile) is an active-site residue. An intrachain disulfide couples Cys114 to Cys210. Gly138 is an ATP binding site. Residues 160-162 (RDQ) form an interaction with tRNA region. Residue Cys210 is the Cysteine persulfide intermediate of the active site.

This sequence belongs to the MnmA/TRMU family.

Its subcellular location is the cytoplasm. The catalysed reaction is S-sulfanyl-L-cysteinyl-[protein] + uridine(34) in tRNA + AH2 + ATP = 2-thiouridine(34) in tRNA + L-cysteinyl-[protein] + A + AMP + diphosphate + H(+). Its function is as follows. Catalyzes the 2-thiolation of uridine at the wobble position (U34) of tRNA, leading to the formation of s(2)U34. The chain is tRNA-specific 2-thiouridylase MnmA from Bartonella henselae (strain ATCC 49882 / DSM 28221 / CCUG 30454 / Houston 1) (Rochalimaea henselae).